The following is a 478-amino-acid chain: UDP-glycosyltransferase 90A1 (478 aa).

UDP-alpha-D-glucose is bound by residues threonine 289, 343–345, 360–368, and 382–385; these read VDQ, HCGWNSAQE, and MAEQ.

It belongs to the UDP-glycosyltransferase family.

The sequence is that of UDP-glycosyltransferase 90A1 (UGT90A1) from Arabidopsis thaliana (Mouse-ear cress).